Consider the following 453-residue polypeptide: MDEDGERRVRTKRSCSPESSDNGSGDEVDWISDLPEALIVLVLLNLPTKDVIKTSVLSTKWRNIWRYVPRLDLDNRHFTEFDSLASFIDRFMRSNRKVNKFKLRCGSDLDGDVDLATCSWKWIYMAIKRKVQHIDVTWPGVRIYPEIYNCESLVSLKLSEVTLTKPEFVSLPSLKVLVLDWVEFYNEFAFDMLMSGCPVLESFTLCRRYLDNVRVLRVISQSLLSFNYYGSSSKSFRDDLVVILDAPKLEKLKLSHQLTASFIIENLSSLVEADIDIEFNFCRGKKFDPDDLPKREMIRNFLVGLSRVKTMTIAACTLEVIYDYSRCEPLPLFPNLSFFSVEFYQKRWEILPFFFKSCSNLKSLVLESDYFPRKRTSIISEPRCLLSSLEYVKIEFALDKGKMELVRYLLENSPILKKLTLSLDHSSRKKSCVILRELITIPRCSTSCRVIVL.

Residues 1 to 28 (MDEDGERRVRTKRSCSPESSDNGSGDEV) form a disordered region. The span at 14–23 (SCSPESSDNG) shows a compositional bias: polar residues. In terms of domain architecture, F-box spans 28–81 (VDWISDLPEALIVLVLLNLPTKDVIKTSVLSTKWRNIWRYVPRLDLDNRHFTEF). LRR repeat units lie at residues 155-179 (SLKL…VLVL), 210-235 (LDNV…SSKS), 246-269 (APKL…NLSS), 305-329 (LSRV…RCEP), and 358-381 (CSNL…IISE). The region spanning 373 to 423 (RKRTSIISEPRCLLSSLEYVKIEFALDKGKMELVRYLLENSPILKKLTLSL) is the FBD domain.

This Arabidopsis thaliana (Mouse-ear cress) protein is Putative F-box/FBD/LRR-repeat protein At1g66290.